Consider the following 296-residue polypeptide: Methylsterol monooxygenase erg25B (296 aa).

The next 3 membrane-spanning stretches (helical) occupy residues 50 to 70 (IMSFVMHEIVYFGRSVPWILI), 98 to 118 (FVLLSHFTVELPQIWLFHPMA), and 125 to 145 (TSVPFPSVWTMMYQIAIFFVL). The Fatty acid hydroxylase domain occupies 140–276 (AIFFVLEDTW…FRWWDYLLDT (137 aa)). Positions 154 to 158 (HRALH) match the Histidine box-1 motif. A Histidine box-2 motif is present at residues 167 to 171 (HKIHH). Residues 201 to 221 (ILWCALTGDLHIFTMYVWIVL) form a helical membrane-spanning segment. The short motif at 251-257 (HHDLHHE) is the Histidine box-3 element.

The protein belongs to the sterol desaturase family. It depends on Fe cation as a cofactor.

Its subcellular location is the endoplasmic reticulum membrane. The protein operates within steroid metabolism; ergosterol biosynthesis. In terms of biological role, sterol-C4-methyl oxidase; part of the third module of ergosterol biosynthesis pathway that includes the late steps of the pathway. Erg25B is a catalytic component of the C-4 demethylation complex that catalyzes the conversion of 4,4-dimethylfecosterol into fecosterol via 4-methylfecosterol. The third module or late pathway involves the ergosterol synthesis itself through consecutive reactions that mainly occur in the endoplasmic reticulum (ER) membrane. Firstly, the squalene synthase erg9 catalyzes the condensation of 2 farnesyl pyrophosphate moieties to form squalene, which is the precursor of all steroids. Squalene synthase is crucial for balancing the incorporation of farnesyl diphosphate (FPP) into sterol and nonsterol isoprene synthesis. Secondly, squalene is converted into lanosterol by the consecutive action of the squalene epoxidase erg1 and the lanosterol synthase erg7. Then, the delta(24)-sterol C-methyltransferase erg6 methylates lanosterol at C-24 to produce eburicol. Eburicol is the substrate of the sterol 14-alpha demethylase encoded by cyp51A and cyp51B, to yield 4,4,24-trimethyl ergosta-8,14,24(28)-trienol. The C-14 reductase erg24 then reduces the C14=C15 double bond which leads to 4,4-dimethylfecosterol. A sequence of further demethylations at C-4, involving the C-4 demethylation complex containing the C-4 methylsterol oxidases erg25A or erg25B, the sterol-4-alpha-carboxylate 3-dehydrogenase erg26 and the 3-keto-steroid reductase erg27, leads to the production of fecosterol via 4-methylfecosterol. The C-8 sterol isomerase erg2 then catalyzes the reaction which results in unsaturation at C-7 in the B ring of sterols and thus converts fecosterol to episterol. The sterol-C5-desaturase erg3B then catalyzes the introduction of a C-5 double bond in the B ring to produce 5-dehydroepisterol. The 2 other sterol-C5-desaturases, erg3A and erg3C, seem to be less important in ergosterol biosynthesis. The C-22 sterol desaturase erg5 further converts 5-dehydroepisterol into ergosta-5,7,22,24(28)-tetraen-3beta-ol by forming the C-22(23) double bond in the sterol side chain. Finally, ergosta-5,7,22,24(28)-tetraen-3beta-ol is substrate of the C-24(28) sterol reductases erg4A and erg4B to produce ergosterol. Possible alternative sterol biosynthetic pathways might exist from fecosterol to ergosterol, depending on the activities of the erg3 isoforms. The protein is Methylsterol monooxygenase erg25B of Aspergillus fumigatus (strain ATCC MYA-4609 / CBS 101355 / FGSC A1100 / Af293) (Neosartorya fumigata).